Reading from the N-terminus, the 159-residue chain is Succinate dehydrogenase assembly factor 2, mitochondrial (159 aa).

The transit peptide at 1–14 directs the protein to the mitochondrion; sequence MASFCLSRCCALRG.

The protein belongs to the SDHAF2 family. Interacts with the flavoprotein subunit within the SDH catalytic dimer.

Its subcellular location is the mitochondrion matrix. Its function is as follows. Plays an essential role in the assembly of succinate dehydrogenase (SDH), an enzyme complex (also referred to as respiratory complex II) that is a component of both the tricarboxylic acid (TCA) cycle and the mitochondrial electron transport chain, and which couples the oxidation of succinate to fumarate with the reduction of ubiquinone (coenzyme Q) to ubiquinol. Required for flavinylation (covalent attachment of FAD) of the flavoprotein subunit of the SDH catalytic dimer. The protein is Succinate dehydrogenase assembly factor 2, mitochondrial of Culex quinquefasciatus (Southern house mosquito).